Consider the following 85-residue polypeptide: uncharacterized protein (85 aa).

Over residues 64-76 (DPPVRRSGGREQH) the composition is skewed to basic and acidic residues. Residues 64–85 (DPPVRRSGGREQHLAQVWRATS) form a disordered region.

This is an uncharacterized protein from Mycobacterium bovis (strain ATCC BAA-935 / AF2122/97).